We begin with the raw amino-acid sequence, 937 residues long: CAP-Gly domain-containing linker protein 1 homolog (937 aa).

The CAP-Gly domain maps to 39–81 (GPIHGKDGMFCGIELLEPNGKHDGTFQGVSYFIATPYHGIFAP). 2 disordered regions span residues 90–131 (EELP…VMST) and 264–548 (LPND…SRLQ). Positions 268–281 (LNANFSNKNSTTTF) are enriched in polar residues. The span at 285 to 295 (ETPKVEIRENG) shows a compositional bias: basic and acidic residues. Residues 296 to 309 (NLDNSIETPPQQSP) show a composition bias toward polar residues. 4 stretches are compositionally biased toward basic and acidic residues: residues 317 to 353 (HESD…KEEP), 383 to 396 (IEAE…EIKS), 409 to 424 (PQKE…ETPR), and 463 to 473 (AKERVEKEKKI). Over residues 492–501 (SSIPSTSSAS) the composition is skewed to low complexity. Coiled-coil stretches lie at residues 566–740 (EDNE…VDEI) and 773–800 (QQIE…DLMQ). 2 disordered regions span residues 819–866 (MESR…DSMN) and 916–937 (PTIK…GLVM). Positions 832 to 844 (RSRSSASGSRPIS) are enriched in low complexity. The segment covering 845 to 858 (MATSNGGDQRLSTS) has biased composition (polar residues).

The protein is CAP-Gly domain-containing linker protein 1 homolog of Caenorhabditis elegans.